Consider the following 216-residue polypeptide: UPF0502 protein Spea_2482 (216 aa).

This sequence belongs to the UPF0502 family.

In Shewanella pealeana (strain ATCC 700345 / ANG-SQ1), this protein is UPF0502 protein Spea_2482.